Consider the following 540-residue polypeptide: Keratin, type II cytoskeletal 73 (540 aa).

The tract at residues 1–131 (MSRQFTYKSG…DPEIQKVCAQ (131 aa)) is head. The coil 1A stretch occupies residues 132-167 (EREQIKALNNKFASFIDKVRFLEQQNQVLGTKWELL). Residues 132–445 (EREQIKALNN…KLLEGEECRM (314 aa)) enclose the IF rod domain. The interval 168-186 (QQQDLDNCKNNLEPILEGY) is linker 1. Residues 187–278 (ISNLRKQLEM…CLYEGEIAQM (92 aa)) are coil 1B. The linker 12 stretch occupies residues 279 to 302 (QSHISDTSVILSMDNNRNLDLNSI). Positions 303–441 (IAEVRAQYED…ATYRKLLEGE (139 aa)) are coil 2. The tract at residues 442–540 (ECRMSGEYTN…LSSPTKKTPR (99 aa)) is tail. The segment at 509–540 (GEAKTRLGSTSEIKDLLGKTPALSSPTKKTPR) is disordered. A compositionally biased stretch (polar residues) spans 530–540 (ALSSPTKKTPR).

This sequence belongs to the intermediate filament family. Heterotetramer of two type I and two type II keratins.

In terms of biological role, has a role in hair formation. Specific component of keratin intermediate filaments in the inner root sheath (IRS) of the hair follicle. This Bos taurus (Bovine) protein is Keratin, type II cytoskeletal 73 (KRT73).